A 356-amino-acid polypeptide reads, in one-letter code: Tyrosine recombinase XerS (356 aa).

The 106-residue stretch at 16–121 (IMPWYVLDYY…ALSSLYKYLT (106 aa)) folds into the Core-binding (CB) domain. Positions 169–354 (AFLDYVDKEY…VNDEQKNALD (186 aa)) constitute a Tyr recombinase domain. Residues R210, K234, H306, R309, and H332 contribute to the active site. Y341 (O-(3'-phospho-DNA)-tyrosine intermediate) is an active-site residue.

It belongs to the 'phage' integrase family. XerS subfamily.

Its subcellular location is the cytoplasm. Its activity is regulated as follows. FtsK is required for recombination. Site-specific tyrosine recombinase, which acts by catalyzing the cutting and rejoining of the recombining DNA molecules. Essential to convert dimers of the bacterial chromosome into monomers to permit their segregation at cell division. In Streptococcus equi subsp. zooepidemicus (strain H70), this protein is Tyrosine recombinase XerS.